The primary structure comprises 189 residues: Glycerol-3-phosphate acyltransferase (189 aa).

5 helical membrane passes run 1 to 21, 50 to 70, 77 to 97, 111 to 131, and 151 to 171; these read MFWL…AIVL, KLAI…VLLA, LHAQ…PLYF, MLMG…LLTF, and LLAW…VMIV.

It belongs to the PlsY family. As to quaternary structure, probably interacts with PlsX.

The protein localises to the cell inner membrane. It carries out the reaction an acyl phosphate + sn-glycerol 3-phosphate = a 1-acyl-sn-glycero-3-phosphate + phosphate. Its pathway is lipid metabolism; phospholipid metabolism. Functionally, catalyzes the transfer of an acyl group from acyl-phosphate (acyl-PO(4)) to glycerol-3-phosphate (G3P) to form lysophosphatidic acid (LPA). This enzyme utilizes acyl-phosphate as fatty acyl donor, but not acyl-CoA or acyl-ACP. In Pseudomonas putida (strain ATCC 700007 / DSM 6899 / JCM 31910 / BCRC 17059 / LMG 24140 / F1), this protein is Glycerol-3-phosphate acyltransferase.